The sequence spans 294 residues: MRIRIAARGSKLSRIQVMMVENYLHKLGIETEFIEIKTKADLFQNEPLSKLGKGVFEKEVNQAVLDNKADVAVHSMKDILTEISENLEIYAVLPRDPPFDILISRKNLFNLEPNSIIGTSSIRRKNFLTFYRNDLNIKDLRGNIDTRLKKYFEGQYDGIIIAEASIYRLKEQVQYYRLDPHLFTPEANQGIIVVIGRKKDETIKKIFNEINDKDTLEIAIAERKALSIVGGGCHSPIGVYFEKYDKDFHGIISSSFGRKKITIEEYFHNMTPYEAGELLGKRFLEEIKNEGIIP.

C233 bears the S-(dipyrrolylmethanemethyl)cysteine mark.

The protein belongs to the HMBS family. Dipyrromethane serves as cofactor.

It catalyses the reaction 4 porphobilinogen + H2O = hydroxymethylbilane + 4 NH4(+). It functions in the pathway porphyrin-containing compound metabolism; protoporphyrin-IX biosynthesis; coproporphyrinogen-III from 5-aminolevulinate: step 2/4. Its function is as follows. Tetrapolymerization of the monopyrrole PBG into the hydroxymethylbilane pre-uroporphyrinogen in several discrete steps. The protein is Probable porphobilinogen deaminase of Sulfurisphaera tokodaii (strain DSM 16993 / JCM 10545 / NBRC 100140 / 7) (Sulfolobus tokodaii).